The primary structure comprises 1311 residues: Clustered mitochondria protein homolog (1311 aa).

The interval 1-46 (MAATNEVIPTSENPSDVSGSSQKLATEETALANGVDHEEEDSGEAG) is disordered. Positions 7-24 (VIPTSENPSDVSGSSQKL) are enriched in polar residues. A Clu domain is found at 335-579 (DITRTQENYL…RVTPLDITWM (245 aa)). Disordered regions lie at residues 629-691 (ERKR…QERI) and 915-965 (QSQT…VNAS). The span at 655–691 (EASKSDEPTENGELAKKADESDKDAEPSKPAADQERI) shows a compositional bias: basic and acidic residues. A compositionally biased stretch (polar residues) spans 915–930 (QSQTEAAAAPPTTNGE). TPR repeat units lie at residues 1034 to 1067 (ARVY…SERT), 1076 to 1109 (LLNY…WKVV), and 1118 to 1151 (ITTI…CEEV). The segment at 1236–1311 (VSPRVTLGQT…RGGAAAAAGK (76 aa)) is disordered. A compositionally biased stretch (polar residues) spans 1242-1253 (LGQTQLQPQVGQ). Basic and acidic residues predominate over residues 1259–1279 (AGRDSRSSRGLDSRSIDELLK). Residues 1289-1303 (KNKKRPGRSNPKRRG) show a composition bias toward basic residues.

This sequence belongs to the CLU family. In terms of assembly, may associate with the eukaryotic translation initiation factor 3 (eIF-3) complex.

Its subcellular location is the cytoplasm. MRNA-binding protein involved in proper cytoplasmic distribution of mitochondria. The protein is Clustered mitochondria protein homolog of Sclerotinia sclerotiorum (strain ATCC 18683 / 1980 / Ss-1) (White mold).